A 460-amino-acid polypeptide reads, in one-letter code: Bifunctional protein GlmU (460 aa).

Residues 1-229 are pyrophosphorylase; that stretch reads MTNYAIILAA…FNESLGVNDR (229 aa). UDP-N-acetyl-alpha-D-glucosamine is bound by residues 8 to 11, lysine 22, glutamine 72, and 77 to 78; these read LAAG and GT. Aspartate 102 serves as a coordination point for Mg(2+). UDP-N-acetyl-alpha-D-glucosamine-binding residues include glycine 139, glutamate 154, asparagine 169, and asparagine 227. A Mg(2+)-binding site is contributed by asparagine 227. A linker region spans residues 230–250; that stretch reads VALATAETVMRQRITQKHMVN. An N-acetyltransferase region spans residues 251 to 460; it reads GVTFQNPETV…RLAHHPSRSK (210 aa). 2 residues coordinate UDP-N-acetyl-alpha-D-glucosamine: arginine 332 and lysine 350. Histidine 362 (proton acceptor) is an active-site residue. Positions 365 and 376 each coordinate UDP-N-acetyl-alpha-D-glucosamine. Residues alanine 379, 385–386, serine 404, alanine 422, and arginine 439 each bind acetyl-CoA; that span reads NY.

This sequence in the N-terminal section; belongs to the N-acetylglucosamine-1-phosphate uridyltransferase family. The protein in the C-terminal section; belongs to the transferase hexapeptide repeat family. In terms of assembly, homotrimer. Mg(2+) is required as a cofactor.

The protein resides in the cytoplasm. The enzyme catalyses alpha-D-glucosamine 1-phosphate + acetyl-CoA = N-acetyl-alpha-D-glucosamine 1-phosphate + CoA + H(+). It catalyses the reaction N-acetyl-alpha-D-glucosamine 1-phosphate + UTP + H(+) = UDP-N-acetyl-alpha-D-glucosamine + diphosphate. It participates in nucleotide-sugar biosynthesis; UDP-N-acetyl-alpha-D-glucosamine biosynthesis; N-acetyl-alpha-D-glucosamine 1-phosphate from alpha-D-glucosamine 6-phosphate (route II): step 2/2. It functions in the pathway nucleotide-sugar biosynthesis; UDP-N-acetyl-alpha-D-glucosamine biosynthesis; UDP-N-acetyl-alpha-D-glucosamine from N-acetyl-alpha-D-glucosamine 1-phosphate: step 1/1. The protein operates within bacterial outer membrane biogenesis; LPS lipid A biosynthesis. Its function is as follows. Catalyzes the last two sequential reactions in the de novo biosynthetic pathway for UDP-N-acetylglucosamine (UDP-GlcNAc). The C-terminal domain catalyzes the transfer of acetyl group from acetyl coenzyme A to glucosamine-1-phosphate (GlcN-1-P) to produce N-acetylglucosamine-1-phosphate (GlcNAc-1-P), which is converted into UDP-GlcNAc by the transfer of uridine 5-monophosphate (from uridine 5-triphosphate), a reaction catalyzed by the N-terminal domain. This is Bifunctional protein GlmU from Streptococcus pyogenes serotype M18 (strain MGAS8232).